Here is a 67-residue protein sequence, read N- to C-terminus: Alpha-toxin Bu1 (67 aa).

The LCN-type CS-alpha/beta domain maps to 3-65 (RDAYIADDKN…VPIRIPGRCR (63 aa)). Intrachain disulfides connect Cys13-Cys64, Cys17-Cys37, Cys23-Cys47, and Cys27-Cys49. Arg65 carries the post-translational modification Arginine amide.

It belongs to the long (4 C-C) scorpion toxin superfamily. Sodium channel inhibitor family. Alpha subfamily. As to expression, expressed by the venom gland.

It is found in the secreted. Alpha toxins bind voltage-independently at site-3 of sodium channels (Nav) and inhibit the inactivation of the activated channels, thereby blocking neuronal transmission. Since the experiments have been done on F11 cells (immortalized cell line derived from rat DRG neurons mainly expressing Nav1.3/SCN3A, but also Nav1.7/SCN9A and Nav1.2/SCN2A), it is supposed to act on these channels. The slow of inactivation process is partially reversible. Is lethal to mice. The chain is Alpha-toxin Bu1 from Buthacus macrocentrus (Turkish scorpion).